Consider the following 266-residue polypeptide: Phosphate import ATP-binding protein PstB 1 (266 aa).

The ABC transporter domain occupies 21–261; it reads ISTQDLSVFY…PKGEITEDYI (241 aa). 54 to 61 provides a ligand contact to ATP; it reads GGSGSGKS.

This sequence belongs to the ABC transporter superfamily. Phosphate importer (TC 3.A.1.7) family. In terms of assembly, the complex is composed of two ATP-binding proteins (PstB), two transmembrane proteins (PstC and PstA) and a solute-binding protein (PstS).

The protein resides in the cell membrane. It catalyses the reaction phosphate(out) + ATP + H2O = ADP + 2 phosphate(in) + H(+). Its function is as follows. Part of the ABC transporter complex PstSACB involved in phosphate import. Responsible for energy coupling to the transport system. This chain is Phosphate import ATP-binding protein PstB 1, found in Lactobacillus johnsonii (strain CNCM I-12250 / La1 / NCC 533).